A 62-amino-acid chain; its full sequence is MTSPAAAGNGLFKFLRPKLRPQSTDIQAAAGWGVAAVTGALWVIQPWDFLRKTFIEKQEEEK.

At 2–25 the chain is on the mitochondrial matrix side; sequence TSPAAAGNGLFKFLRPKLRPQSTD. A helical transmembrane segment spans residues 26 to 44; it reads IQAAAGWGVAAVTGALWVI. Over 45–62 the chain is Mitochondrial intermembrane; it reads QPWDFLRKTFIEKQEEEK.

Belongs to the UQCR11/QCR10 family. In terms of assembly, component of the ubiquinol-cytochrome c oxidoreductase (cytochrome b-c1 complex, complex III, CIII), a multisubunit enzyme composed of 3 respiratory subunits cytochrome b, cytochrome c1 and Rieske protein, 2 core protein subunits, and additional low-molecular weight protein subunits. The complex exists as an obligatory dimer and forms supercomplexes (SCs) in the inner mitochondrial membrane with cytochrome c oxidase (complex IV, CIV).

Its subcellular location is the mitochondrion inner membrane. Functionally, component of the ubiquinol-cytochrome c oxidoreductase, a multisubunit transmembrane complex that is part of the mitochondrial electron transport chain which drives oxidative phosphorylation. The respiratory chain contains 3 multisubunit complexes succinate dehydrogenase (complex II, CII), ubiquinol-cytochrome c oxidoreductase (cytochrome b-c1 complex, complex III, CIII) and cytochrome c oxidase (complex IV, CIV), that cooperate to transfer electrons derived from NADH and succinate to molecular oxygen, creating an electrochemical gradient over the inner membrane that drives transmembrane transport and the ATP synthase. The cytochrome b-c1 complex catalyzes electron transfer from ubiquinol to cytochrome c, linking this redox reaction to translocation of protons across the mitochondrial inner membrane, with protons being carried across the membrane as hydrogens on the quinol. In the process called Q cycle, 2 protons are consumed from the matrix, 4 protons are released into the intermembrane space and 2 electrons are passed to cytochrome c. QCR10 has a role in CIII assembly and RIP1 stability. The chain is Ubiquinol-cytochrome c reductase complex 6.7 kDa protein from Solanum tuberosum (Potato).